We begin with the raw amino-acid sequence, 321 residues long: Glucokinase (321 aa).

Residue 8-13 (GDVGGT) coordinates ATP.

Belongs to the bacterial glucokinase family.

It is found in the cytoplasm. It catalyses the reaction D-glucose + ATP = D-glucose 6-phosphate + ADP + H(+). In terms of biological role, not highly important in E.coli as glucose is transported into the cell by the PTS system already as glucose 6-phosphate. This is Glucokinase from Escherichia coli O139:H28 (strain E24377A / ETEC).